Consider the following 342-residue polypeptide: Autoinducer 2 import system permease protein LsrC (342 aa).

The Periplasmic segment spans residues 1–13 (MLKFIQNNREITA). Residues 14 to 34 (LLAVVLLFVLPGFLDRQYLSV) traverse the membrane as a helical segment. Topologically, residues 35-38 (QTLT) are cytoplasmic. A helical membrane pass occupies residues 39–59 (MVYSSAQILILLAMGATLVML). Residues 60–69 (TRNIDVSVGS) lie on the Periplasmic side of the membrane. A helical transmembrane segment spans residues 70 to 90 (ITGMCAVLLGMLLNAGYSLPV). At 91–92 (AC) the chain is on the cytoplasmic side. A helical membrane pass occupies residues 93–113 (VATLLLGLLAGFFNGVLVAWL). Residue lysine 114 is a topological domain, periplasmic. A helical transmembrane segment spans residues 115–135 (IPAIVATLGTLGLYRGIMLLW). Over 136-154 (TGGKWIEGLPAELKQLSAP) the chain is Cytoplasmic. Residues 155–175 (LLFGVSAIGWLTIILVAFMAW) form a helical membrane-spanning segment. Topologically, residues 176 to 212 (LLAKTAFGRSFYVTGDNLQGARQLGVRTEAIRIVAFS) are periplasmic. The helical transmembrane segment at 213-233 (LNGCMAALAGIVFASQIGFIP) threads the bilayer. Residues 234–251 (NQTGTGLEMKAIAACVLG) are Cytoplasmic-facing. A helical membrane pass occupies residues 252-272 (GISLLGGSGAIIGAVLGAWFL). Topologically, residues 273-283 (TQIDSVLVLLR) are periplasmic. The chain crosses the membrane as a helical span at residues 284 to 304 (IPAWWNDFIAGMVLLAVLVFD). The Cytoplasmic portion of the chain corresponds to 305-342 (GRLRCALERNLRRQKYARFMMPPPPVKPASSGKKREAA).

It belongs to the binding-protein-dependent transport system permease family. AraH/RbsC subfamily. The complex is composed of two ATP-binding proteins (LsrA), two transmembrane proteins (LsrC and LsrD) and a solute-binding protein (LsrB).

It is found in the cell inner membrane. Functionally, part of the ABC transporter complex LsrABCD involved in autoinducer 2 (AI-2) import. Probably responsible for the translocation of the substrate across the membrane. The sequence is that of Autoinducer 2 import system permease protein LsrC (lsrC) from Escherichia coli (strain SMS-3-5 / SECEC).